The primary structure comprises 70 residues: Protein SlyX homolog (70 aa).

This sequence belongs to the SlyX family.

This is Protein SlyX homolog from Shewanella pealeana (strain ATCC 700345 / ANG-SQ1).